The primary structure comprises 368 residues: 3-dehydroquinate synthase (368 aa).

Residues 71-76 (DGEAFK), 105-109 (GVVGD), 129-130 (TT), Lys-142, Lys-151, and 169-172 (TLRT) each bind NAD(+). Positions 184, 247, and 264 each coordinate Zn(2+).

It belongs to the sugar phosphate cyclases superfamily. Dehydroquinate synthase family. Co(2+) serves as cofactor. Zn(2+) is required as a cofactor. Requires NAD(+) as cofactor.

Its subcellular location is the cytoplasm. The enzyme catalyses 7-phospho-2-dehydro-3-deoxy-D-arabino-heptonate = 3-dehydroquinate + phosphate. The protein operates within metabolic intermediate biosynthesis; chorismate biosynthesis; chorismate from D-erythrose 4-phosphate and phosphoenolpyruvate: step 2/7. Functionally, catalyzes the conversion of 3-deoxy-D-arabino-heptulosonate 7-phosphate (DAHP) to dehydroquinate (DHQ). In Cupriavidus necator (strain ATCC 17699 / DSM 428 / KCTC 22496 / NCIMB 10442 / H16 / Stanier 337) (Ralstonia eutropha), this protein is 3-dehydroquinate synthase.